Here is a 251-residue protein sequence, read N- to C-terminus: DNA repair protein RecO (251 aa).

The protein belongs to the RecO family.

In terms of biological role, involved in DNA repair and RecF pathway recombination. In Lactococcus lactis subsp. cremoris (strain SK11), this protein is DNA repair protein RecO.